A 198-amino-acid chain; its full sequence is Glycerol-3-phosphate acyltransferase (198 aa).

A run of 5 helical transmembrane segments spans residues 6–26, 56–78, 83–101, 113–133, and 155–175; these read FLPV…GLVL, LAAG…AGYI, AAMA…PVWL, IGIL…LWLA, and FLWW…TLLL.

Belongs to the PlsY family. In terms of assembly, probably interacts with PlsX.

It is found in the cell inner membrane. The catalysed reaction is an acyl phosphate + sn-glycerol 3-phosphate = a 1-acyl-sn-glycero-3-phosphate + phosphate. It participates in lipid metabolism; phospholipid metabolism. Its function is as follows. Catalyzes the transfer of an acyl group from acyl-phosphate (acyl-PO(4)) to glycerol-3-phosphate (G3P) to form lysophosphatidic acid (LPA). This enzyme utilizes acyl-phosphate as fatty acyl donor, but not acyl-CoA or acyl-ACP. This chain is Glycerol-3-phosphate acyltransferase, found in Bradyrhizobium diazoefficiens (strain JCM 10833 / BCRC 13528 / IAM 13628 / NBRC 14792 / USDA 110).